A 72-amino-acid chain; its full sequence is SPbeta prophage-derived uncharacterized protein YoqN (72 aa).

This Bacillus subtilis (strain 168) protein is SPbeta prophage-derived uncharacterized protein YoqN (yoqN).